The primary structure comprises 346 residues: L-glyceraldehyde 3-phosphate reductase (346 aa).

NADP(+) is bound by residues Trp-33, Asp-61, Tyr-66, Ser-168, Gln-193, Thr-223, Leu-225, Gln-227, Lys-233, Ser-303, Gln-307, and Asn-311.

Belongs to the shaker potassium channel beta subunit family.

It carries out the reaction a primary alcohol + NADP(+) = an aldehyde + NADPH + H(+). Aldo-keto reductase that catalyzes the stereospecific, NADPH-dependent reduction of L-glyceraldehyde 3-phosphate (L-GAP) to L-glycerol 3-phosphate (L-G3P). The protein is L-glyceraldehyde 3-phosphate reductase of Escherichia coli O157:H7.